Here is a 346-residue protein sequence, read N- to C-terminus: Methylthioribose-1-phosphate isomerase (346 aa).

Substrate is bound by residues 44-46 (RGA), arginine 87, and glutamine 194. Aspartate 235 acts as the Proton donor in catalysis. Residue 245–246 (NK) participates in substrate binding.

The protein belongs to the eIF-2B alpha/beta/delta subunits family. MtnA subfamily.

It carries out the reaction 5-(methylsulfanyl)-alpha-D-ribose 1-phosphate = 5-(methylsulfanyl)-D-ribulose 1-phosphate. It functions in the pathway amino-acid biosynthesis; L-methionine biosynthesis via salvage pathway; L-methionine from S-methyl-5-thio-alpha-D-ribose 1-phosphate: step 1/6. Functionally, catalyzes the interconversion of methylthioribose-1-phosphate (MTR-1-P) into methylthioribulose-1-phosphate (MTRu-1-P). This is Methylthioribose-1-phosphate isomerase from Desulforamulus reducens (strain ATCC BAA-1160 / DSM 100696 / MI-1) (Desulfotomaculum reducens).